We begin with the raw amino-acid sequence, 632 residues long: 1-deoxy-D-xylulose-5-phosphate synthase (632 aa).

Residues H78 and 119-121 (AHS) contribute to the thiamine diphosphate site. A Mg(2+)-binding site is contributed by D150. Thiamine diphosphate-binding positions include 151–152 (GA), N179, Y286, and E368. N179 serves as a coordination point for Mg(2+).

This sequence belongs to the transketolase family. DXPS subfamily. In terms of assembly, homodimer. Mg(2+) is required as a cofactor. It depends on thiamine diphosphate as a cofactor.

The catalysed reaction is D-glyceraldehyde 3-phosphate + pyruvate + H(+) = 1-deoxy-D-xylulose 5-phosphate + CO2. It functions in the pathway metabolic intermediate biosynthesis; 1-deoxy-D-xylulose 5-phosphate biosynthesis; 1-deoxy-D-xylulose 5-phosphate from D-glyceraldehyde 3-phosphate and pyruvate: step 1/1. In terms of biological role, catalyzes the acyloin condensation reaction between C atoms 2 and 3 of pyruvate and glyceraldehyde 3-phosphate to yield 1-deoxy-D-xylulose-5-phosphate (DXP). This chain is 1-deoxy-D-xylulose-5-phosphate synthase, found in Albidiferax ferrireducens (strain ATCC BAA-621 / DSM 15236 / T118) (Rhodoferax ferrireducens).